A 348-amino-acid chain; its full sequence is tRNA N6-adenosine threonylcarbamoyltransferase (348 aa).

The Fe cation site is built by H116 and H120. Substrate-binding positions include 138–142 (IISGG), D171, G184, and N282. D310 lines the Fe cation pocket.

The protein belongs to the KAE1 / TsaD family. The cofactor is Fe(2+).

The protein localises to the cytoplasm. It carries out the reaction L-threonylcarbamoyladenylate + adenosine(37) in tRNA = N(6)-L-threonylcarbamoyladenosine(37) in tRNA + AMP + H(+). In terms of biological role, required for the formation of a threonylcarbamoyl group on adenosine at position 37 (t(6)A37) in tRNAs that read codons beginning with adenine. Is involved in the transfer of the threonylcarbamoyl moiety of threonylcarbamoyl-AMP (TC-AMP) to the N6 group of A37, together with TsaE and TsaB. TsaD likely plays a direct catalytic role in this reaction. This chain is tRNA N6-adenosine threonylcarbamoyltransferase, found in Ehrlichia ruminantium (strain Welgevonden).